A 341-amino-acid chain; its full sequence is Peroxisomal membrane protein PEX14 (341 aa).

S2 carries the post-translational modification N-acetylserine. Positions 86 to 94 (PPTLPHRDW) match the SH3-binding motif. Residues 276–341 (MQEESDKEKE…QNGQVEDSIP (66 aa)) are disordered. A compositionally biased stretch (basic and acidic residues) spans 279–295 (ESDKEKENGSDANKDDN). Positions 308–341 (IDSNASIPEWQKNTAANEISVPDWQNGQVEDSIP) are enriched in polar residues. Phosphoserine is present on S313.

The protein belongs to the peroxin-14 family. Interacts with PEX13 (via SH3 domain); forming the PEX13-PEX14 docking complex. Interacts with PEX5 (via WxxxF/Y motifs). Interacts with PEX7. Interacts with PEX9.

It is found in the peroxisome membrane. Functionally, component of the PEX13-PEX14 docking complex, a translocon channel that specifically mediates the import of peroxisomal cargo proteins bound to PEX5 or PEX21 receptors. The PEX13-PEX14 docking complex forms a large import pore which can be opened to a diameter of about 9 nm. Mechanistically, PEX5 (or PEX21) receptor along with cargo proteins associates with the PEX14 subunit of the PEX13-PEX14 docking complex in the cytosol, leading to the insertion of the receptor into the organelle membrane with the concomitant translocation of the cargo into the peroxisome matrix. This chain is Peroxisomal membrane protein PEX14, found in Saccharomyces cerevisiae (strain ATCC 204508 / S288c) (Baker's yeast).